A 100-amino-acid chain; its full sequence is MNNETKFTPLNIDNVMAEKGMLERVRAIVEYGIKHNLTAREVRDIINREMNRLETVVALQNETAREEYIRRRLGLSDQDIVTDAHVFEAFEIRQHLGLTN.

This sequence belongs to the mulikevirus gp14 protein family.

Its subcellular location is the host cytoplasm. This is an uncharacterized protein from Enterobacteriaceae (Bacteriophage Mu).